We begin with the raw amino-acid sequence, 382 residues long: Mannitol-1-phosphate 5-dehydrogenase (382 aa).

3-14 lines the NAD(+) pocket; that stretch reads ALHFGAGNIGRG.

It belongs to the mannitol dehydrogenase family.

The catalysed reaction is D-mannitol 1-phosphate + NAD(+) = beta-D-fructose 6-phosphate + NADH + H(+). This chain is Mannitol-1-phosphate 5-dehydrogenase, found in Salmonella enteritidis PT4 (strain P125109).